The chain runs to 405 residues: Tyrosine--tRNA ligase (405 aa).

Residue tyrosine 35 participates in L-tyrosine binding. The 'HIGH' region signature appears at 40 to 49; that stretch reads TTSSSLHIGH. L-tyrosine is bound by residues tyrosine 166 and glutamine 170. The 'KMSKS' region motif lies at 226–230; sequence KMGKS. Lysine 229 is an ATP binding site. One can recognise an S4 RNA-binding domain in the interval 340–404; sequence ILLIDLMLDS…VGKKKFLRIV (65 aa).

It belongs to the class-I aminoacyl-tRNA synthetase family. TyrS type 1 subfamily. As to quaternary structure, homodimer.

The protein localises to the cytoplasm. It catalyses the reaction tRNA(Tyr) + L-tyrosine + ATP = L-tyrosyl-tRNA(Tyr) + AMP + diphosphate + H(+). In terms of biological role, catalyzes the attachment of tyrosine to tRNA(Tyr) in a two-step reaction: tyrosine is first activated by ATP to form Tyr-AMP and then transferred to the acceptor end of tRNA(Tyr). This is Tyrosine--tRNA ligase from Borrelia garinii subsp. bavariensis (strain ATCC BAA-2496 / DSM 23469 / PBi) (Borreliella bavariensis).